The following is a 21-amino-acid chain: Outer membrane protein P2 (21 aa).

Disulfide bond interactions within and between MOMP molecules and other components form high molecular-weight oligomers.

It localises to the cell outer membrane. Its function is as follows. Structural rigidity of the outer membrane of elementary bodies and porin forming, permitting diffusion of solutes through the intracellular reticulate body membrane. Binds carcinoembryonic antigen (CEA). The chain is Outer membrane protein P2 from Glaesserella parasuis (Haemophilus parasuis).